Consider the following 458-residue polypeptide: tRNA modification GTPase MnmE (458 aa).

Residues arginine 22, glutamate 86, and arginine 125 each coordinate (6S)-5-formyl-5,6,7,8-tetrahydrofolate. One can recognise a TrmE-type G domain in the interval 221–379; it reads GIRTVILGRP…LEQTITEMFF (159 aa). Asparagine 231 provides a ligand contact to K(+). GTP contacts are provided by residues 231 to 236, 250 to 256, and 275 to 278; these read NAGKSS, TEIAGTT, and DTAG. Serine 235 lines the Mg(2+) pocket. K(+) is bound by residues threonine 250, isoleucine 252, and threonine 255. Residue threonine 256 coordinates Mg(2+). A (6S)-5-formyl-5,6,7,8-tetrahydrofolate-binding site is contributed by lysine 458.

Belongs to the TRAFAC class TrmE-Era-EngA-EngB-Septin-like GTPase superfamily. TrmE GTPase family. Homodimer. Heterotetramer of two MnmE and two MnmG subunits. K(+) serves as cofactor.

The protein localises to the cytoplasm. Exhibits a very high intrinsic GTPase hydrolysis rate. Involved in the addition of a carboxymethylaminomethyl (cmnm) group at the wobble position (U34) of certain tRNAs, forming tRNA-cmnm(5)s(2)U34. The sequence is that of tRNA modification GTPase MnmE from Lachnoclostridium phytofermentans (strain ATCC 700394 / DSM 18823 / ISDg) (Clostridium phytofermentans).